The following is a 191-amino-acid chain: Protein Ves (191 aa).

It belongs to the Ves family.

This is Protein Ves from Escherichia coli (strain K12 / MC4100 / BW2952).